A 750-amino-acid polypeptide reads, in one-letter code: Methylmalonyl-CoA mutase, mitochondrial (750 aa).

The transit peptide at 1–32 (MLRAKNQLFLLSPHYLRQVKESSGSRLIQQRL) directs the protein to the mitochondrion. Q50 is a malonyl-CoA binding site. The residue at position 89 (K89) is an N6-acetyllysine. Residues 96 to 99 (YPTM) and 106 to 110 (TIRQY) each bind malonyl-CoA. K212 carries the N6-acetyllysine modification. Residues 216-218 (TIQ), R228, K255, H265, and 304-306 (RLS) contribute to the malonyl-CoA site. K335 carries the post-translational modification N6-acetyllysine. K343 bears the N6-succinyllysine mark. S481 bears the Phosphoserine mark. K595 carries the post-translational modification N6-succinyllysine. The residue at position 602 (K602) is an N6-acetyllysine. A B12-binding domain is found at 614 to 746 (RPRLLVAKMG…DDIEKCLEKK (133 aa)). H627 serves as a coordination point for adenosylcob(III)alamin.

This sequence belongs to the methylmalonyl-CoA mutase family. In terms of assembly, homodimer. Interacts (the apoenzyme form) with MMAA; the interaction is GTP dependent. Requires adenosylcob(III)alamin as cofactor.

Its subcellular location is the mitochondrion matrix. The protein localises to the mitochondrion. It localises to the cytoplasm. It carries out the reaction (R)-methylmalonyl-CoA = succinyl-CoA. Its activity is regulated as follows. During catalysis, accumulation of oxidized inactive cofactor hydroxocobalamin (OH2Cbl) leads to loss of MMUT activity. Interaction with MMAA decreases the rate of OH2Cbl formation and promotes the replacement of OH2Cbl by the active cofactor adenosylcobalamin (AdoCbl), thereby restoring MMUT activity. Inhibited by itaconyl-CoA, a metabolite that inactivates the coenzyme B12 cofactor. Inhibited at high concentration of substrate. Its function is as follows. Catalyzes the reversible isomerization of methylmalonyl-CoA (MMCoA) (generated from branched-chain amino acid metabolism and degradation of dietary odd chain fatty acids and cholesterol) to succinyl-CoA (3-carboxypropionyl-CoA), a key intermediate of the tricarboxylic acid cycle. The chain is Methylmalonyl-CoA mutase, mitochondrial from Homo sapiens (Human).